A 155-amino-acid chain; its full sequence is Small ribosomal subunit protein uS7c (155 aa).

Belongs to the universal ribosomal protein uS7 family. In terms of assembly, part of the 30S ribosomal subunit.

Its subcellular location is the plastid. The protein resides in the chloroplast. In terms of biological role, one of the primary rRNA binding proteins, it binds directly to 16S rRNA where it nucleates assembly of the head domain of the 30S subunit. The polypeptide is Small ribosomal subunit protein uS7c (rps7) (Dioscorea bulbifera (Air potato)).